We begin with the raw amino-acid sequence, 440 residues long: Ran-specific GTPase-activating protein 30 (440 aa).

One can recognise a RanBD1 domain in the interval 1–314 (MDEILAKAGS…LVLKIDRSDD (314 aa)). At Thr-272 the chain carries Phosphothreonine. Over residues 341–371 (IEEDEEEDEEEDEEEGKDGEERKEEEEEENK) the composition is skewed to acidic residues. The interval 341–375 (IEEDEEEDEEEDEEEGKDGEERKEEEEEENKLEDK) is disordered.

In terms of assembly, interacts with GSP1.

The protein resides in the cytoplasm. It localises to the nucleus. Important for the export of protein containing nuclear export signal (NES) out of the nucleus. Stimulates the GTPase activity of GSP1. The sequence is that of Ran-specific GTPase-activating protein 30 (YRB30) from Saccharomyces cerevisiae (strain ATCC 204508 / S288c) (Baker's yeast).